The following is a 102-amino-acid chain: Large ribosomal subunit protein bL36m (102 aa).

This sequence belongs to the bacterial ribosomal protein bL36 family. As to quaternary structure, component of the mitochondrial ribosome large subunit (39S) which comprises a 16S rRNA and about 50 distinct proteins.

It is found in the mitochondrion. The chain is Large ribosomal subunit protein bL36m (Mrpl36) from Mus musculus (Mouse).